Consider the following 34-residue polypeptide: Photosystem II reaction center protein M (34 aa).

Residues 7–27 (GFVASLMFILVPAIFLIVLYI) traverse the membrane as a helical segment.

It belongs to the PsbM family. As to quaternary structure, PSII is composed of 1 copy each of membrane proteins PsbA, PsbB, PsbC, PsbD, PsbE, PsbF, PsbH, PsbI, PsbJ, PsbK, PsbL, PsbM, PsbT, PsbX, PsbY, PsbZ, Psb30/Ycf12, peripheral proteins PsbO, CyanoQ (PsbQ), PsbU, PsbV and a large number of cofactors. It forms dimeric complexes.

The protein localises to the cellular thylakoid membrane. Functionally, one of the components of the core complex of photosystem II (PSII). PSII is a light-driven water:plastoquinone oxidoreductase that uses light energy to abstract electrons from H(2)O, generating O(2) and a proton gradient subsequently used for ATP formation. It consists of a core antenna complex that captures photons, and an electron transfer chain that converts photonic excitation into a charge separation. This subunit is found at the monomer-monomer interface. This Synechococcus sp. (strain CC9902) protein is Photosystem II reaction center protein M.